The primary structure comprises 149 residues: MDVQLPIEAKDIQKLIPHRYPFLQLDRITAFEPMKTLTAIKNVSINEPQFQGHFPDLPVMPGVLIIEAMAQACGTLAILSEGGRKENEFFFFAGIDEARFKRQVIPGDQLVFEVELLTSRRGIGKFNAVAKVDGQVAVEAIIMCAKRVV.

H53 is an active-site residue.

It belongs to the thioester dehydratase family. FabZ subfamily.

It localises to the cytoplasm. The catalysed reaction is a (3R)-hydroxyacyl-[ACP] = a (2E)-enoyl-[ACP] + H2O. Involved in unsaturated fatty acids biosynthesis. Catalyzes the dehydration of short chain beta-hydroxyacyl-ACPs and long chain saturated and unsaturated beta-hydroxyacyl-ACPs. This chain is 3-hydroxyacyl-[acyl-carrier-protein] dehydratase FabZ, found in Neisseria meningitidis serogroup C / serotype 2a (strain ATCC 700532 / DSM 15464 / FAM18).